The chain runs to 312 residues: Glyoxylate/hydroxypyruvate reductase A (312 aa).

The active site involves Arg-227. His-275 serves as the catalytic Proton donor.

The protein belongs to the D-isomer specific 2-hydroxyacid dehydrogenase family. GhrA subfamily.

Its subcellular location is the cytoplasm. The enzyme catalyses glycolate + NADP(+) = glyoxylate + NADPH + H(+). It catalyses the reaction (R)-glycerate + NAD(+) = 3-hydroxypyruvate + NADH + H(+). It carries out the reaction (R)-glycerate + NADP(+) = 3-hydroxypyruvate + NADPH + H(+). Functionally, catalyzes the NADPH-dependent reduction of glyoxylate and hydroxypyruvate into glycolate and glycerate, respectively. The sequence is that of Glyoxylate/hydroxypyruvate reductase A from Escherichia fergusonii (strain ATCC 35469 / DSM 13698 / CCUG 18766 / IAM 14443 / JCM 21226 / LMG 7866 / NBRC 102419 / NCTC 12128 / CDC 0568-73).